A 129-amino-acid polypeptide reads, in one-letter code: Photosystem II extrinsic protein V (129 aa).

Heme c is bound by residues C35, C38, H39, and H90.

The protein belongs to the cytochrome c family. PsbV subfamily. In terms of assembly, PSII is composed of 1 copy each of membrane proteins PsbA, PsbB, PsbC, PsbD, PsbE, PsbF, PsbH, PsbI, PsbJ, PsbK, PsbL, PsbM, PsbT, PsbX, PsbY, PsbZ, Psb30/Ycf12, peripheral proteins PsbO, CyanoQ (PsbQ), PsbU, PsbV and a large number of cofactors. It forms dimeric complexes. Homodimer in crystal structure. Requires heme c as cofactor.

Its subcellular location is the cellular thylakoid membrane. Its function is as follows. One of the extrinsic, lumenal subunits of photosystem II (PSII). PSII is a light-driven water plastoquinone oxidoreductase, using light energy to abstract electrons from H(2)O, generating a proton gradient subsequently used for ATP formation. The extrinsic proteins stabilize the structure of photosystem II oxygen-evolving complex (OEC), the ion environment of oxygen evolution and protect the OEC against heat-induced inactivation. Low-potential cytochrome c that plays a role in the OEC of PSII. The chain is Photosystem II extrinsic protein V from Limnospira maxima (Arthrospira maxima).